A 263-amino-acid polypeptide reads, in one-letter code: Phosphatidylglycerol--prolipoprotein diacylglyceryl transferase (263 aa).

Helical transmembrane passes span 6–26 (VIFS…VLGI), 50–70 (LLTA…VLIY), 85–105 (TWEG…AVII), and 112–132 (IPIF…LLLG). R133 is an a 1,2-diacyl-sn-glycero-3-phospho-(1'-sn-glycerol) binding site. The next 3 membrane-spanning stretches (helical) occupy residues 169–189 (LYEA…LFYL), 197–217 (GATT…VEFF), and 233–253 (MGQL…LGAL).

Belongs to the Lgt family.

It localises to the cell membrane. The enzyme catalyses L-cysteinyl-[prolipoprotein] + a 1,2-diacyl-sn-glycero-3-phospho-(1'-sn-glycerol) = an S-1,2-diacyl-sn-glyceryl-L-cysteinyl-[prolipoprotein] + sn-glycerol 1-phosphate + H(+). It functions in the pathway protein modification; lipoprotein biosynthesis (diacylglyceryl transfer). Catalyzes the transfer of the diacylglyceryl group from phosphatidylglycerol to the sulfhydryl group of the N-terminal cysteine of a prolipoprotein, the first step in the formation of mature lipoproteins. This chain is Phosphatidylglycerol--prolipoprotein diacylglyceryl transferase, found in Wolbachia pipientis subsp. Culex pipiens (strain wPip).